A 933-amino-acid polypeptide reads, in one-letter code: Thyroid peroxidase (933 aa).

The signal sequence occupies residues 1 to 18 (MRALAVLSVTLVMACTEA). Residues 19–846 (FFPFISRGKE…TCVDSGRLPR (828 aa)) lie on the Extracellular side of the membrane. N-linked (GlcNAc...) asparagine glycosylation occurs at Asn-129. Cys-142 and Cys-158 are joined by a disulfide. Residue Asp-238 participates in heme b binding. Catalysis depends on His-239, which acts as the Proton acceptor. Residue Asp-240 participates in Ca(2+) binding. 2 disulfides stabilise this stretch: Cys-259/Cys-269 and Cys-263/Cys-286. Asn-307 carries an N-linked (GlcNAc...) asparagine glycan. Residues Thr-321, Phe-323, Asp-325, and Ser-327 each contribute to the Ca(2+) site. N-linked (GlcNAc...) asparagine glycosylation occurs at Asn-342. Glu-399 and His-494 together coordinate heme b. N-linked (GlcNAc...) asparagine glycosylation occurs at Asn-569. Cystine bridges form between Cys-598-Cys-655 and Cys-696-Cys-721. The Sushi domain occupies 740–795 (DKCGFPESVENGDFVHCEESGRRVLVYSCRHGYELQGREQLTCTQEGWDFQPPLCK). One can recognise an EGF-like; calcium-binding domain in the interval 796–839 (DVNECADGAHPPCHASARCRNTKGGFQCLCADPYELGDDGRTCV). 3 disulfides stabilise this stretch: Cys-800/Cys-814, Cys-808/Cys-823, and Cys-825/Cys-838. Residues 847-871 (VTWISMSLAALLIGGFAGLTSTVIC) traverse the membrane as a helical segment. Residues 872 to 933 (RWTRTGTKST…RDTHRLPRAL (62 aa)) are Cytoplasmic-facing. Positions 881–933 (TLPISETGGGTPELRCGKHQAVGTSPQRAAAQDSEQESAGMEGRDTHRLPRAL) are disordered. Over residues 922 to 933 (EGRDTHRLPRAL) the composition is skewed to basic and acidic residues.

The protein belongs to the peroxidase family. XPO subfamily. Interacts with DUOX1, DUOX2 and CYBA. It depends on Ca(2+) as a cofactor. Requires heme b as cofactor. Post-translationally, glycosylated. Heme is covalently bound through a H(2)O(2)-dependent autocatalytic process. Heme insertion is important for the delivery of protein at the cell surface. In terms of processing, cleaved in its N-terminal part.

The protein localises to the membrane. The protein resides in the cell surface. The catalysed reaction is 2 iodide + H2O2 + 2 H(+) = diiodine + 2 H2O. It catalyses the reaction [thyroglobulin]-L-tyrosine + iodide + H2O2 + H(+) = [thyroglobulin]-3-iodo-L-tyrosine + 2 H2O. It carries out the reaction [thyroglobulin]-3-iodo-L-tyrosine + iodide + H2O2 + H(+) = [thyroglobulin]-3,5-diiodo-L-tyrosine + 2 H2O. The enzyme catalyses 2 [thyroglobulin]-3,5-diiodo-L-tyrosine + H2O2 = [thyroglobulin]-L-thyroxine + [thyroglobulin]-dehydroalanine + 2 H2O. The catalysed reaction is [thyroglobulin]-3-iodo-L-tyrosine + [thyroglobulin]-3,5-diiodo-L-tyrosine + H2O2 = [thyroglobulin]-3,3',5-triiodo-L-thyronine + [thyroglobulin]-dehydroalanine + 2 H2O. The protein operates within hormone biosynthesis; thyroid hormone biosynthesis. In terms of biological role, iodination and coupling of the hormonogenic tyrosines in thyroglobulin to yield the thyroid hormones T(3) and T(4). In Homo sapiens (Human), this protein is Thyroid peroxidase.